A 299-amino-acid chain; its full sequence is Protein charybde (299 aa).

Residues 73 to 103 are disordered; it reads LNTRPSATPPSAGGGGPLAGGGSVGMTTPKQ. The span at 84–96 shows a compositional bias: gly residues; that stretch reads AGGGGPLAGGGSV.

It belongs to the DDIT4 family.

It is found in the cytoplasm. Inhibits cell growth by regulating the Tor pathway upstream of the Tsc1-Tsc2 complex and downstream of Akt1. Acts as a cell death activator during head development. In Drosophila melanogaster (Fruit fly), this protein is Protein charybde (chrb).